We begin with the raw amino-acid sequence, 1172 residues long: Nuclear exosome regulator NRDE2 (1172 aa).

Residue Ala2 is modified to N-acetylalanine. The tract at residues 46 to 144 (VTALASEGSP…KEAEKPCQGS (99 aa)) is disordered. Over residues 71–83 (SGESNTSEKLAQT) the composition is skewed to polar residues. A coiled-coil region spans residues 78–330 (EKLAQTSRKK…EEFNRRVREN (253 aa)). The segment covering 84–107 (SRKKKKEKKKRRKHQHHRKTKRRH) has biased composition (basic residues). The span at 120–139 (EAGKDRASRSIRDDQKEAEK) shows a compositional bias: basic and acidic residues. An MID/MTR4-interacting domain region spans residues 171 to 275 (FRTDKKPDPA…DSAEAATPVT (105 aa)). The disordered stretch occupies residues 292 to 313 (LQGQGPAEQESKQPDSQQDREN). A compositionally biased stretch (basic and acidic residues) spans 300-313 (QESKQPDSQQDREN). 5 HAT repeats span residues 314-346 (AALKARVEEFNRRVRENPWDTQLWMAFVAFQDE), 404-436 (WEPSALAKEWQKLLFLHPNNTSLWQRYLSFCQS), 766-800 (SQGKSCKKLAKNLLKEPENRNNFCLWKQYAHLEWL), 986-1018 (YPLAPLRETLSDALKLYPGNQVLWRAYVQIQNK), and 1075-1109 (GLTHRIRALFENAIRSDKGNQCPLLWRMYLNFLVS).

This sequence belongs to the NRDE2 family. As to quaternary structure, interacts with MTREX; the interaction is direct and stabilizes NRDE2. Interacts with EXOSC10, EFTUD2 and EIF4A3.

The protein localises to the nucleus speckle. Its subcellular location is the nucleus. The protein resides in the nucleolus. It localises to the nucleoplasm. In terms of biological role, protein of the nuclear speckles that regulates RNA degradation and export from the nucleus through its interaction with MTREX an essential factor directing various RNAs to exosomal degradation. Changes the conformation of MTREX, precluding its association with the nuclear exosome and interaction with proteins required for its function in RNA exosomal degradation. Negatively regulates, for instance, the degradation of mRNAs and lncRNAs by inhibiting their MTREX-mediated recruitment to nuclear exosome. By preventing the degradation of RNAs in the nucleus, it promotes their export to the cytoplasm. U5 snRNP-associated RNA splicing factor which is required for efficient splicing of CEP131 pre-mRNA and plays an important role in centrosome maturation, integrity and function during mitosis. Suppresses intron retention in a subset of pre-mRNAs containing short, GC-rich introns with relatively weak 5' and 3' splice sites. Plays a role in DNA damage response. The protein is Nuclear exosome regulator NRDE2 (Nrde2) of Mus musculus (Mouse).